Reading from the N-terminus, the 473-residue chain is Flavonol 3-O-glucosyltransferase UGT89B1 (473 aa).

Histidine 25 (proton acceptor) is an active-site residue. Residue histidine 25 participates in an anthocyanidin binding. Residue aspartate 127 is the Charge relay of the active site. UDP-alpha-D-glucose contacts are provided by alanine 348, glutamine 350, histidine 365, tryptophan 368, asparagine 369, serine 370, and glutamate 373. Position 388 (alanine 388) interacts with an anthocyanidin. Aspartate 389 and glutamine 390 together coordinate UDP-alpha-D-glucose.

Belongs to the UDP-glycosyltransferase family.

The enzyme catalyses a flavonol + UDP-alpha-D-glucose = a flavonol 3-O-beta-D-glucoside + UDP + H(+). It catalyses the reaction a 7-O-hydroxy-flavonol + UDP-alpha-D-glucose = a flavonol 7-O-beta-D-glucoside + UDP + H(+). In terms of biological role, possesses quercetin 3-O-glucosyltransferase, 7-O-glucosyltransferase and 4'-O-glucosyltransferase activities in vitro. Also active in vitro on benzoates and benzoate derivatives. This Arabidopsis thaliana (Mouse-ear cress) protein is Flavonol 3-O-glucosyltransferase UGT89B1.